Consider the following 319-residue polypeptide: MNSSVEKQNSEIPEKENEEFTFQDNSQGFELEFSTNKKTLSKIQKANLSLKTNDAFNISFLKAFSRKNHIYYHVNYKEFSVDICDTHGKNYLPLVTKSEIKKNLDKIKDEKVRSTISDIHFGAIKVLIKARFREGINSPIKMALIDDRITDRQDSILGAAHGNLVYGKFMFTVYPKYTTSILDQRLDRTLAFIHHFERNDLMRKGDKVFSITYLVAYALANSHHSIDYKEKDAIEIDDVFSEIGSVKSPTFTELDPEPNSWAIDIAQGKQPIGFKPKPTVSNNFLRFDKETSPSSSHQKSLEEISDKIDTLVVKLNNIS.

The disordered stretch occupies residues 1–20 (MNSSVEKQNSEIPEKENEEF). Residues 289-319 (KETSPSSSHQKSLEEISDKIDTLVVKLNNIS) adopt a coiled-coil conformation.

It belongs to the caulimoviridae movement protein family. Homotrimer, through the coiled-coil domain. Interacts with VAP.

It is found in the host cell junction. The protein resides in the host plasmodesma. In terms of biological role, transports viral genome to neighboring plant cells directly through plasmosdesmata, without any budding. The movement protein allows efficient cell to cell propagation, by bypassing the host cell wall barrier. Acts by forming tubules structures that increase the size exclusion limit (SEL) of plasmodesmata, thereby allowing viral ribonucleocapsids to spread directly to neighboring cells. This Dianthus caryophyllus (Carnation) protein is Movement protein.